Reading from the N-terminus, the 252-residue chain is 5-oxoprolinase subunit A (252 aa).

The protein belongs to the LamB/PxpA family. In terms of assembly, forms a complex composed of PxpA, PxpB and PxpC.

The catalysed reaction is 5-oxo-L-proline + ATP + 2 H2O = L-glutamate + ADP + phosphate + H(+). Catalyzes the cleavage of 5-oxoproline to form L-glutamate coupled to the hydrolysis of ATP to ADP and inorganic phosphate. The sequence is that of 5-oxoprolinase subunit A from Staphylococcus saprophyticus subsp. saprophyticus (strain ATCC 15305 / DSM 20229 / NCIMB 8711 / NCTC 7292 / S-41).